The primary structure comprises 38 residues: Large ribosomal subunit protein bL36A (38 aa).

This sequence belongs to the bacterial ribosomal protein bL36 family.

The sequence is that of Large ribosomal subunit protein bL36A from Enterobacter sp. (strain 638).